Here is a 326-residue protein sequence, read N- to C-terminus: tRNA-modifying protein YgfZ (326 aa).

Folate-binding residues include W27 and W189.

The protein belongs to the tRNA-modifying YgfZ family.

The protein localises to the cytoplasm. Its function is as follows. Folate-binding protein involved in regulating the level of ATP-DnaA and in the modification of some tRNAs. It is probably a key factor in regulatory networks that act via tRNA modification, such as initiation of chromosomal replication. This chain is tRNA-modifying protein YgfZ, found in Salmonella arizonae (strain ATCC BAA-731 / CDC346-86 / RSK2980).